The primary structure comprises 195 residues: Imidazoleglycerol-phosphate dehydratase (195 aa).

This sequence belongs to the imidazoleglycerol-phosphate dehydratase family.

Its subcellular location is the cytoplasm. It catalyses the reaction D-erythro-1-(imidazol-4-yl)glycerol 3-phosphate = 3-(imidazol-4-yl)-2-oxopropyl phosphate + H2O. It functions in the pathway amino-acid biosynthesis; L-histidine biosynthesis; L-histidine from 5-phospho-alpha-D-ribose 1-diphosphate: step 6/9. In Dechloromonas aromatica (strain RCB), this protein is Imidazoleglycerol-phosphate dehydratase.